The sequence spans 287 residues: Diaminopimelate epimerase (287 aa).

Residues Asn-11, Gln-44, and Asn-64 each coordinate substrate. The active-site Proton donor is Cys-73. Substrate is bound by residues 74–75, Asn-157, Asn-190, and 208–209; these read GN and ER. Residue Cys-217 is the Proton acceptor of the active site. 218–219 is a substrate binding site; it reads GT.

Belongs to the diaminopimelate epimerase family. In terms of assembly, homodimer.

Its subcellular location is the cytoplasm. The catalysed reaction is (2S,6S)-2,6-diaminopimelate = meso-2,6-diaminopimelate. Its pathway is amino-acid biosynthesis; L-lysine biosynthesis via DAP pathway; DL-2,6-diaminopimelate from LL-2,6-diaminopimelate: step 1/1. Its function is as follows. Catalyzes the stereoinversion of LL-2,6-diaminopimelate (L,L-DAP) to meso-diaminopimelate (meso-DAP), a precursor of L-lysine and an essential component of the bacterial peptidoglycan. This chain is Diaminopimelate epimerase, found in Halorhodospira halophila (strain DSM 244 / SL1) (Ectothiorhodospira halophila (strain DSM 244 / SL1)).